The following is a 221-amino-acid chain: Endo-1,4-beta-xylanase 11A (221 aa).

The first 18 residues, 1–18 (MKFATVLAFATAAGAAFA), serve as a signal peptide directing secretion. Residues 23 to 220 (SSETTEAGQL…GTGSASMSVS (198 aa)) form the GH11 domain. Glu-111 (nucleophile) is an active-site residue. Asn-117 carries N-linked (GlcNAc...) asparagine glycosylation. Glu-207 acts as the Proton donor in catalysis.

This sequence belongs to the glycosyl hydrolase 11 (cellulase G) family.

It is found in the secreted. It catalyses the reaction Endohydrolysis of (1-&gt;4)-beta-D-xylosidic linkages in xylans.. It functions in the pathway glycan degradation; xylan degradation. Functionally, endo-1,4-beta-xylanase involved in the hydrolysis of xylan, a major structural heterogeneous polysaccharide found in plant biomass representing the second most abundant polysaccharide in the biosphere, after cellulose. The polypeptide is Endo-1,4-beta-xylanase 11A (XYN11A) (Mycosarcoma maydis (Corn smut fungus)).